A 196-amino-acid polypeptide reads, in one-letter code: Small ribosomal subunit protein uS4c (196 aa).

The disordered stretch occupies residues 17–36 (ALPGLTRKTPKSGSNLKKKF). Residues 89–169 (MRLDNILFRL…LPKHLTIDTL (81 aa)) form the S4 RNA-binding domain.

This sequence belongs to the universal ribosomal protein uS4 family. In terms of assembly, part of the 30S ribosomal subunit. Contacts protein S5. The interaction surface between S4 and S5 is involved in control of translational fidelity.

Its subcellular location is the plastid. The protein localises to the chloroplast. In terms of biological role, one of the primary rRNA binding proteins, it binds directly to 16S rRNA where it nucleates assembly of the body of the 30S subunit. With S5 and S12 plays an important role in translational accuracy. This chain is Small ribosomal subunit protein uS4c (rps4), found in Festuca gigantea (Giant fescue).